We begin with the raw amino-acid sequence, 432 residues long: 3-phosphoshikimate 1-carboxyvinyltransferase (432 aa).

3 residues coordinate 3-phosphoshikimate: Lys-23, Ser-24, and Arg-28. Phosphoenolpyruvate is bound at residue Lys-23. The phosphoenolpyruvate site is built by Gly-99 and Arg-127. 3-phosphoshikimate contacts are provided by Ser-172, Ser-173, Gln-174, Ser-200, Asp-317, Asn-341, and Lys-345. Phosphoenolpyruvate is bound at residue Gln-174. The active-site Proton acceptor is the Asp-317. Phosphoenolpyruvate is bound by residues Arg-349, Arg-391, and Lys-416.

It belongs to the EPSP synthase family. As to quaternary structure, monomer.

The protein localises to the cytoplasm. It carries out the reaction 3-phosphoshikimate + phosphoenolpyruvate = 5-O-(1-carboxyvinyl)-3-phosphoshikimate + phosphate. It functions in the pathway metabolic intermediate biosynthesis; chorismate biosynthesis; chorismate from D-erythrose 4-phosphate and phosphoenolpyruvate: step 6/7. Functionally, catalyzes the transfer of the enolpyruvyl moiety of phosphoenolpyruvate (PEP) to the 5-hydroxyl of shikimate-3-phosphate (S3P) to produce enolpyruvyl shikimate-3-phosphate and inorganic phosphate. In Blochmanniella pennsylvanica (strain BPEN), this protein is 3-phosphoshikimate 1-carboxyvinyltransferase.